Reading from the N-terminus, the 267-residue chain is Undecaprenyl-diphosphatase (267 aa).

7 helical membrane passes run 39-59 (QGLA…ILYF), 87-107 (WMIA…KDFI), 111-131 (LRSA…LWWV), 149-169 (ALFI…RSGA), 189-209 (FLMS…KLVT), 218-238 (ALSI…HAFL), and 244-264 (VGMM…IAFL).

Belongs to the UppP family.

The protein localises to the cell inner membrane. It catalyses the reaction di-trans,octa-cis-undecaprenyl diphosphate + H2O = di-trans,octa-cis-undecaprenyl phosphate + phosphate + H(+). Functionally, catalyzes the dephosphorylation of undecaprenyl diphosphate (UPP). Confers resistance to bacitracin. In Photobacterium profundum (strain SS9), this protein is Undecaprenyl-diphosphatase.